The chain runs to 921 residues: MAGHTEENAQLLSTEQESVSRHSSDSAASTASTTSLVFDRIGERVAANRSEKSMMVTPKFPPRGEMAYADDEHTQIHLDEEEEKDYDLEDSAFLTNGATNKSVDKKLRKLIWIVGGVFIGAWVLALFIFLGKQAYKHSSEIPHDPQATSSRGNGKKVTMDQVMGGQWRATKHSISWIAGANGEDGLLLEQGSAGKDYLIVEDVRTQNPETVGTLDRMTLMKDGSFTVAGRSLYPSKVYPSKDLKKVLVATDVQSNWRHSFYAKYWIFDVESQTAEPLDPVDLDGRVQLASWSPKSDAIVFTRDNNMYLRKLSSPTVIQITTDGGPEFFYGVPDWVYEEEVFAGASATWWDDSGKYIAFLRTNESEVPEYPIQYFVSRPSGKEPLPGEENYPEVREIKYPKAGAPNPTVDLLFYDIFKAEVFEVTIAGGFEPKNLLITEVVWAGSTGKALIRETNRESDILRVVLVDVVAREGKTVRYTDINKLDGGWFEVSEDTRYIPADPANGRPHDGYIDTIIHENYDHLGYFTPMDNPEPILLTSGNWEVVQAPSAVDLKNNLVYFVSTKESPITRQVYSVKLDGTDMKAITDTSNEGYYGASFSKGAGYVLLNYNGPGIPWQKVISTPSNGNQYTHTIEENKGLAEMAKKHDLPILIYQTVTIDGFELQVVERRPPHFNPKKKYPVLFYLYGGPGSQTVSKSFNVDFESYIASNLGYIVVTVDGRGTGFIGRKARTIIRGNIGHYEARDQIETAKIWASKKYVDASRMAIWGWSYGGFMTLKTLEEDAGETFSYGMAVAPVTDWRFYDSIYTERYMHTPQHNPGGYDNTSISNVEALSKNVRFLVMHGVADDNVHMQNTLTLLDKLDLAGVENYDVHVFPDSDHSIYFHNANRIVYDKLNNWLINAFNGEWLRTANAVPLQIDAAKV.

The tract at residues 1 to 33 (MAGHTEENAQLLSTEQESVSRHSSDSAASTAST) is disordered. Residues 1–109 (MAGHTEENAQ…NKSVDKKLRK (109 aa)) are Cytoplasmic-facing. Over residues 8–17 (NAQLLSTEQE) the composition is skewed to polar residues. The helical; Signal-anchor for type II membrane protein transmembrane segment at 110–130 (LIWIVGGVFIGAWVLALFIFL) threads the bilayer. Residues 131 to 921 (GKQAYKHSSE…VPLQIDAAKV (791 aa)) lie on the Vacuolar side of the membrane. N-linked (GlcNAc...) asparagine glycosylation is present at Asn-362. The Charge relay system role is filled by Ser-768. N-linked (GlcNAc...) asparagine glycosylation is present at Asn-822. Catalysis depends on charge relay system residues Asp-845 and His-878.

Belongs to the peptidase S9B family.

The protein localises to the vacuole membrane. It catalyses the reaction Release of an N-terminal dipeptide, Xaa-Yaa-|-Zaa-, from a polypeptide, preferentially when Yaa is Pro, provided Zaa is neither Pro nor hydroxyproline.. Its function is as follows. Type IV dipeptidyl-peptidase which removes N-terminal dipeptides sequentially from polypeptides having unsubstituted N-termini provided that the penultimate residue is proline. The polypeptide is Probable dipeptidyl-aminopeptidase B (dapB) (Sclerotinia sclerotiorum (strain ATCC 18683 / 1980 / Ss-1) (White mold)).